A 69-amino-acid chain; its full sequence is UPF0337 protein ECA0631 (69 aa).

The protein belongs to the UPF0337 (CsbD) family.

In Pectobacterium atrosepticum (strain SCRI 1043 / ATCC BAA-672) (Erwinia carotovora subsp. atroseptica), this protein is UPF0337 protein ECA0631.